The chain runs to 474 residues: Protein IFIT1 homolog B (474 aa).

TPR repeat units lie at residues 52–85, 95–128, 141–174, 182–216, 218–250, 251–284, 305–339, 340–373, 378–412, and 437–470; these read VGIH…IQKE, LVTW…CKKF, VDCE…NPEN, AITV…NPDD, YIRV…ISSQ, AYVF…TPTS, ATNW…KRTF, EMAY…KIFE, QEIH…EKMS, and VESV…AADL.

It belongs to the IFIT family.

Its function is as follows. IFIT1B is likely non-functional, lacking the critical antiviral role of IFIT1. Unlike IFIT1, which is essential in the innate immune response as part of an interferon-dependent multiprotein complex, IFIT1B does not prevent the translation of viral RNAs that lack host-specific 2'-O-methylation at their 5' cap. Consequently, it probably cannot inhibit their translation by competing with the host translation machinery. This is Protein IFIT1 homolog B from Homo sapiens (Human).